We begin with the raw amino-acid sequence, 742 residues long: MKQAMTPEEIKEKKPYLDWSLTEAEYDYIRTQLLGRLPNYTETGLFSAMWSEHCSYKKSKPVLRLFPNKNERVLQGPGEGAGVVDIDDGQAVVFKAESHNHPTTVEPYQGAATGVGGILRDIFSMGARPIASLDSLHFGELDNSTTRMKVTNTVRGIGDYGNCMGIPTIAGETTFDPCYQGNILCNAMSVGLMDQKDIQQGRAAGIGNAVMYVGAKTGRDGIHGATFASADFNDENMTQRSAVQVGNPFMEKLLLEACLDLIRNHPDWLVGIQDMGAAGIVSSSAEMASEGQSGMELNLDLVPQREPGMSAYEIMLSESQERMLLCVKKGHEEDVKKIFDFYDLEAVTIGRITAGHDYVLFHDGEEVCHIPVSSLTDDVLEEESLEKKPARIELAEQQPAWIPDIDNVAEVLTALLAQSTIADKSSLYQQYDSQVRTNTVAGPGSDAGVLRIRGTHKGLAMTTDGNGRFVYLSPEVGGQIALVEAAANIIASGAEPLAITDCLNYGDPTDPEIFWELHQSVQGMADACREFNTPVISGNVSLYNENNGQAIHPTPMVGMVGLIKNIDRVIPSFVQHPGDKVYLVGQTRDDYAGSELQKMMTGDISGIVESFDLHHVHQYMQRLLTTMENGLVSSAHDLSEGGLGVALAETVFKTDLGLKIDLADQHTARLFSETPGRFIVTVAPEKATEFEQVLGKDAHLIGEVTNSHWLMVKLANGELNENVAKLQETWEEAIPCQLKSKD.

His53 is a catalytic residue. Tyr56 and Lys95 together coordinate ATP. Glu97 is a binding site for Mg(2+). Substrate-binding positions include 98 to 101 and Arg120; that span reads SHNH. His99 functions as the Proton acceptor in the catalytic mechanism. Asp121 provides a ligand contact to Mg(2+). Gln244 is a binding site for substrate. Asp274 is a Mg(2+) binding site. Residue 318 to 320 participates in substrate binding; it reads ESQ. Asp501 and Gly538 together coordinate ATP. Residue Asn539 participates in Mg(2+) binding. Ser541 lines the substrate pocket.

This sequence belongs to the FGAMS family. Monomer. Part of the FGAM synthase complex composed of 1 PurL, 1 PurQ and 2 PurS subunits.

It is found in the cytoplasm. It carries out the reaction N(2)-formyl-N(1)-(5-phospho-beta-D-ribosyl)glycinamide + L-glutamine + ATP + H2O = 2-formamido-N(1)-(5-O-phospho-beta-D-ribosyl)acetamidine + L-glutamate + ADP + phosphate + H(+). The protein operates within purine metabolism; IMP biosynthesis via de novo pathway; 5-amino-1-(5-phospho-D-ribosyl)imidazole from N(2)-formyl-N(1)-(5-phospho-D-ribosyl)glycinamide: step 1/2. In terms of biological role, part of the phosphoribosylformylglycinamidine synthase complex involved in the purines biosynthetic pathway. Catalyzes the ATP-dependent conversion of formylglycinamide ribonucleotide (FGAR) and glutamine to yield formylglycinamidine ribonucleotide (FGAM) and glutamate. The FGAM synthase complex is composed of three subunits. PurQ produces an ammonia molecule by converting glutamine to glutamate. PurL transfers the ammonia molecule to FGAR to form FGAM in an ATP-dependent manner. PurS interacts with PurQ and PurL and is thought to assist in the transfer of the ammonia molecule from PurQ to PurL. The sequence is that of Phosphoribosylformylglycinamidine synthase subunit PurL from Limosilactobacillus reuteri (strain DSM 20016) (Lactobacillus reuteri).